The chain runs to 281 residues: GDT1-like protein 4 (281 aa).

The first 22 residues, 1–22, serve as a signal peptide directing secretion; sequence MARRVSTTRLLLLLLLVAAAAA. 6 helical membrane-spanning segments follow: residues 66 to 86, 105 to 125, 137 to 157, 188 to 208, 226 to 246, and 258 to 278; these read AGLG…VSEI, TVLS…TGLG, TNSA…YIAW, IFSR…FLAE, AVGV…FAVV, and GTVA…SYFY.

It belongs to the GDT1 family.

It is found in the membrane. This is GDT1-like protein 4 from Oryza sativa subsp. indica (Rice).